We begin with the raw amino-acid sequence, 229 residues long: NAD-dependent protein deacetylase (229 aa).

The 229-residue stretch at 1 to 229 (MNNLKEAIKQ…NDAVKVFAEI (229 aa)) folds into the Deacetylase sirtuin-type domain. Residues A20, R32, Q96, I98, D99, H114, T181, S182, N205, and V223 each contribute to the NAD(+) site. Nicotinamide contacts are provided by I98 and D99. H114 acts as the Proton acceptor in catalysis.

It belongs to the sirtuin family. Class U subfamily.

The protein localises to the cytoplasm. It catalyses the reaction N(6)-acetyl-L-lysyl-[protein] + NAD(+) + H2O = 2''-O-acetyl-ADP-D-ribose + nicotinamide + L-lysyl-[protein]. Functionally, NAD-dependent protein deacetylase which modulates the activities of several enzymes which are inactive in their acetylated form. This Listeria innocua serovar 6a (strain ATCC BAA-680 / CLIP 11262) protein is NAD-dependent protein deacetylase.